A 206-amino-acid polypeptide reads, in one-letter code: Thymidylate kinase (206 aa).

ATP is bound at residue 11 to 18 (GIDGAGKT).

This sequence belongs to the thymidylate kinase family.

It catalyses the reaction dTMP + ATP = dTDP + ADP. Phosphorylation of dTMP to form dTDP in both de novo and salvage pathways of dTTP synthesis. The protein is Thymidylate kinase of Burkholderia vietnamiensis (strain G4 / LMG 22486) (Burkholderia cepacia (strain R1808)).